The chain runs to 346 residues: Large ribosomal subunit protein uL1c (346 aa).

The transit peptide at 1–70 (MAACATHSSL…RASNHKFIVS (70 aa)) directs the protein to the chloroplast. Tyrosine 129 carries the post-translational modification Phosphotyrosine. At threonine 177 the chain carries Phosphothreonine. A Phosphoserine modification is found at serine 197.

This sequence belongs to the universal ribosomal protein uL1 family. Part of the 50S ribosomal subunit.

It localises to the plastid. The protein localises to the chloroplast. This protein binds directly to 23S ribosomal RNA. This Arabidopsis thaliana (Mouse-ear cress) protein is Large ribosomal subunit protein uL1c (RPL1).